The following is a 348-amino-acid chain: 4-hydroxy-3-methylbut-2-en-1-yl diphosphate synthase (flavodoxin) (348 aa).

Positions 263, 266, 298, and 305 each coordinate [4Fe-4S] cluster.

It belongs to the IspG family. [4Fe-4S] cluster serves as cofactor.

The catalysed reaction is (2E)-4-hydroxy-3-methylbut-2-enyl diphosphate + oxidized [flavodoxin] + H2O + 2 H(+) = 2-C-methyl-D-erythritol 2,4-cyclic diphosphate + reduced [flavodoxin]. It functions in the pathway isoprenoid biosynthesis; isopentenyl diphosphate biosynthesis via DXP pathway; isopentenyl diphosphate from 1-deoxy-D-xylulose 5-phosphate: step 5/6. Converts 2C-methyl-D-erythritol 2,4-cyclodiphosphate (ME-2,4cPP) into 1-hydroxy-2-methyl-2-(E)-butenyl 4-diphosphate. The polypeptide is 4-hydroxy-3-methylbut-2-en-1-yl diphosphate synthase (flavodoxin) (Dehalococcoides mccartyi (strain ATCC BAA-2100 / JCM 16839 / KCTC 5957 / BAV1)).